The sequence spans 142 residues: Large ribosomal subunit protein uL13 (142 aa).

This sequence belongs to the universal ribosomal protein uL13 family. In terms of assembly, part of the 50S ribosomal subunit.

In terms of biological role, this protein is one of the early assembly proteins of the 50S ribosomal subunit, although it is not seen to bind rRNA by itself. It is important during the early stages of 50S assembly. This Ralstonia pickettii (strain 12J) protein is Large ribosomal subunit protein uL13.